Reading from the N-terminus, the 317-residue chain is Hydroxyacyl-CoA dehydrogenase ChsB1 (317 aa).

Leu-32, Asp-51, Asp-82, Ile-83, Asn-108, Ser-168, Tyr-181, Lys-185, and Thr-215 together coordinate NAD(+). Active-site residues include Ser-168, Tyr-181, and Lys-185.

The protein belongs to the short-chain dehydrogenases/reductases (SDR) family. As to quaternary structure, homodimer, with 1 active site on each face.

The catalysed reaction is (22S)-hydroxy-3-oxo-chol-4-ene-24-oyl-CoA + NAD(+) = 3,22-dioxochol-4-en-24-oyl-CoA + NADH + H(+). Its pathway is steroid metabolism; cholesterol degradation. Its function is as follows. A reversible dehydrogenase involved in cholesterol side-chain degradation. Catalyzes the oxidation of hydroxyl-cholesterol-CoA ester metabolic intermediate (22S)-HOCO-CoA (3-oxo-chol-4-ene-(22S)-hydroxy-24-oyl-CoA), the product of ChsH3, has no activity on (22R)-HOCO-CoA (the product of EchA19). Also acts on (3R)-hydroxyoctanoyl-CoA and 17-beta-hydroxyandrost-4-en-3-one, but not on 7-alpha-hydroxyandrost-4-en-3-one, uses NAD(+) but not NADP(+). The chain is Hydroxyacyl-CoA dehydrogenase ChsB1 from Mycobacterium tuberculosis (strain ATCC 25618 / H37Rv).